A 930-amino-acid chain; its full sequence is Protocadherin gamma-B6 (930 aa).

The N-terminal stretch at 1–30 (MGGSCAQRRRAGPRQVLFPLLLPFFYPTLC) is a signal peptide. Cadherin domains follow at residues 31–133 (EPIR…APQF), 134–242 (DKKE…PPVF), 243–347 (SRDE…SPEI), 348–452 (IITS…APVF), 453–562 (DQTS…APRV), and 570–675 (DGSA…LPDL). The Extracellular segment spans residues 31-691 (EPIRYSIPEE…SDPQAELQFY (661 aa)). Residues Asn304, Asn419, and Asn545 are each glycosylated (N-linked (GlcNAc...) asparagine). A helical membrane pass occupies residues 692 to 712 (LVVALALISVLFLLAVILAIA). At 713–930 (LRLRRSLSPT…KKKSGKKEKK (218 aa)) the chain is on the cytoplasmic side. Disordered regions lie at residues 791-839 (PHGG…WPNN) and 900-930 (ATLT…KEKK). Residues 800 to 839 (HPETLTSQAPPNTDWRFSQAQRPGTSGSQNGDDTGTWPNN) are compositionally biased toward polar residues. Positions 920-930 (NKKKSGKKEKK) are enriched in basic residues.

It is found in the cell membrane. Potential calcium-dependent cell-adhesion protein. May be involved in the establishment and maintenance of specific neuronal connections in the brain. The protein is Protocadherin gamma-B6 (PCDHGB6) of Pan troglodytes (Chimpanzee).